Here is a 52-residue protein sequence, read N- to C-terminus: MARYSCCRSHSRSRSRRRRQRCRRRRRRSCGRRRRACYRRYTVRYRRRRRRR.

The disordered stretch occupies residues 1 to 27 (MARYSCCRSHSRSRSRRRRQRCRRRRR). Residues 9-27 (SHSRSRSRRRRQRCRRRRR) are compositionally biased toward basic residues.

The protein belongs to the protamine P1 family. As to expression, testis.

It is found in the nucleus. It localises to the chromosome. Functionally, protamines substitute for histones in the chromatin of sperm during the haploid phase of spermatogenesis. They compact sperm DNA into a highly condensed, stable and inactive complex. The sequence is that of Sperm protamine P1 (PRM1) from Rhinolophus ferrumequinum (Greater horseshoe bat).